The following is a 544-amino-acid chain: Chaperonin GroEL (544 aa).

ATP contacts are provided by residues 29–32, 86–90, Gly-413, 476–478, and Asp-492; these read TLGP, DGTTT, and NAA. The interval 522–544 is disordered; the sequence is PDPNANNNAAAGANPAAGMGGMM. A compositionally biased stretch (low complexity) spans 524-538; it reads PNANNNAAAGANPAA.

The protein belongs to the chaperonin (HSP60) family. In terms of assembly, forms a cylinder of 14 subunits composed of two heptameric rings stacked back-to-back. Interacts with the co-chaperonin GroES.

The protein resides in the cytoplasm. The enzyme catalyses ATP + H2O + a folded polypeptide = ADP + phosphate + an unfolded polypeptide.. Together with its co-chaperonin GroES, plays an essential role in assisting protein folding. The GroEL-GroES system forms a nano-cage that allows encapsulation of the non-native substrate proteins and provides a physical environment optimized to promote and accelerate protein folding. The protein is Chaperonin GroEL of Lacticaseibacillus casei (strain BL23) (Lactobacillus casei).